We begin with the raw amino-acid sequence, 430 residues long: Enolase (430 aa).

Gln-163 serves as a coordination point for (2R)-2-phosphoglycerate. The Proton donor role is filled by Glu-205. Positions 242, 286, and 313 each coordinate Mg(2+). 4 residues coordinate (2R)-2-phosphoglycerate: Lys-338, Arg-367, Ser-368, and Lys-389. Catalysis depends on Lys-338, which acts as the Proton acceptor.

Belongs to the enolase family. Mg(2+) serves as cofactor.

It localises to the cytoplasm. It is found in the secreted. The protein resides in the cell surface. The catalysed reaction is (2R)-2-phosphoglycerate = phosphoenolpyruvate + H2O. It functions in the pathway carbohydrate degradation; glycolysis; pyruvate from D-glyceraldehyde 3-phosphate: step 4/5. Its function is as follows. Catalyzes the reversible conversion of 2-phosphoglycerate (2-PG) into phosphoenolpyruvate (PEP). It is essential for the degradation of carbohydrates via glycolysis. This chain is Enolase, found in Geotalea daltonii (strain DSM 22248 / JCM 15807 / FRC-32) (Geobacter daltonii).